Here is a 95-residue protein sequence, read N- to C-terminus: DNA-directed RNA polymerase subunit Rpo11 (95 aa).

The protein belongs to the archaeal Rpo11/eukaryotic RPB11/RPC19 RNA polymerase subunit family. In terms of assembly, part of the RNA polymerase complex.

Its subcellular location is the cytoplasm. It catalyses the reaction RNA(n) + a ribonucleoside 5'-triphosphate = RNA(n+1) + diphosphate. Functionally, DNA-dependent RNA polymerase (RNAP) catalyzes the transcription of DNA into RNA using the four ribonucleoside triphosphates as substrates. The protein is DNA-directed RNA polymerase subunit Rpo11 of Thermococcus onnurineus (strain NA1).